The following is a 465-amino-acid chain: Methylenetetrahydrofolate--tRNA-(uracil-5-)-methyltransferase TrmFO (465 aa).

An FAD-binding site is contributed by 10–15; the sequence is GAGLAG.

This sequence belongs to the MnmG family. TrmFO subfamily. It depends on FAD as a cofactor.

The protein resides in the cytoplasm. It carries out the reaction uridine(54) in tRNA + (6R)-5,10-methylene-5,6,7,8-tetrahydrofolate + NADH + H(+) = 5-methyluridine(54) in tRNA + (6S)-5,6,7,8-tetrahydrofolate + NAD(+). The enzyme catalyses uridine(54) in tRNA + (6R)-5,10-methylene-5,6,7,8-tetrahydrofolate + NADPH + H(+) = 5-methyluridine(54) in tRNA + (6S)-5,6,7,8-tetrahydrofolate + NADP(+). Functionally, catalyzes the folate-dependent formation of 5-methyl-uridine at position 54 (M-5-U54) in all tRNAs. This is Methylenetetrahydrofolate--tRNA-(uracil-5-)-methyltransferase TrmFO from Deinococcus radiodurans (strain ATCC 13939 / DSM 20539 / JCM 16871 / CCUG 27074 / LMG 4051 / NBRC 15346 / NCIMB 9279 / VKM B-1422 / R1).